The sequence spans 833 residues: Multiple RNA-binding domain-containing protein 1 (833 aa).

Positions Ser2–Asp83 constitute an RRM 1 domain. The tract at residues Glu160–Glu251 is disordered. 2 stretches are compositionally biased toward basic and acidic residues: residues Ala188–Thr205 and Asp213–Leu222. RRM domains follow at residues Lys323 to Ala401, Asn506 to Arg578, Ala619 to Gln702, and Thr721 to Asn798.

Belongs to the RRM MRD1 family.

It localises to the nucleus. Functionally, involved in pre-rRNA processing. This is Multiple RNA-binding domain-containing protein 1 (mrd1) from Schizosaccharomyces pombe (strain 972 / ATCC 24843) (Fission yeast).